Here is a 194-residue protein sequence, read N- to C-terminus: MNLVLASTSPRRKELLTHIGLGRAEFSFSQVAPDIDETPKAGELPRDYVQRLAAEKALAGLALCSGMSQPAVLGSDTIVVLENEILGKPVDEADAKRVLRALSGKAHTVMTAVALAKADQTSVRLVETLVRFCVLSDADIDAYVASQEPMDKAGSYGIQGLGGCFVESIEGSYSCVVGLPLVETRELLSEAGIR.

Catalysis depends on D76, which acts as the Proton acceptor.

It belongs to the Maf family. YhdE subfamily. A divalent metal cation serves as cofactor.

It is found in the cytoplasm. It catalyses the reaction dTTP + H2O = dTMP + diphosphate + H(+). It carries out the reaction UTP + H2O = UMP + diphosphate + H(+). In terms of biological role, nucleoside triphosphate pyrophosphatase that hydrolyzes dTTP and UTP. May have a dual role in cell division arrest and in preventing the incorporation of modified nucleotides into cellular nucleic acids. In Shewanella sp. (strain MR-7), this protein is dTTP/UTP pyrophosphatase.